The primary structure comprises 832 residues: Subtilisin-like protease SBT2.4 (832 aa).

An N-terminal signal peptide occupies residues 1-27 (METNPRKLRSYSYICLIVCIFVLVVCA). The Inhibitor I9 domain occupies 74 to 138 (EAKKIEEIHD…VEEDKGVKLM (65 aa)). The Peptidase S8 domain maps to 150-690 (QQVWQKISNE…AGHVNPARAL (541 aa)). Asp174 functions as the Charge relay system in the catalytic mechanism. Residues Asn196 and Asn238 are each glycosylated (N-linked (GlcNAc...) asparagine). Catalysis depends on His252, which acts as the Charge relay system. Positions 425 to 524 (TNGSVLQPLT…SAAQIILRYY (100 aa)) constitute a PA domain. An N-linked (GlcNAc...) asparagine glycan is attached at Asn426. Ser618 (charge relay system) is an active-site residue. Asn761, Asn774, and Asn800 each carry an N-linked (GlcNAc...) asparagine glycan.

It belongs to the peptidase S8 family.

The protein resides in the secreted. In terms of biological role, serine protease required for epidermal surface formation in embryos and juvenile plants. Involved in embryonic cuticle formation downstream of BHLH95/ZOU. The chain is Subtilisin-like protease SBT2.4 from Arabidopsis thaliana (Mouse-ear cress).